The primary structure comprises 679 residues: MEHVRVIFFFACFLTLAPFHAFAQVDSYEFDPDFNCVDRGNFTANSTFAGNLNRLVSSLSSLKSQAYGFYNLSSGDSSGERAYAIGLCRREVKRDDCVSCIQTAARNLTKQCPLTKQAVVWYTHCMFRYSNRTIYGRKETNPTKAFIAGEEISANRDDFERLQRGLLDRLKGIAAAGGPNRKYAQGNGSASAGYRRFYGTVQCTPDLSEQDCNDCLVFGFENIPSCCDAEIGLRWFSPSCNFRFETWRFYEFDADLEPDPPAIQPADSPQSAARTERTGKGKGGSKVIIAIVIPILLVALLAICLCLVLKWRKNKSGYKNKVLGKSPLSGSIAEDEFSNTESLLVHFETLKTATDNFSSENELGRGGFGSVYKGVFPQGQEIAVKRLSGNSGQGDNEFKNEILLLAKLQHRNLVRLIGFCIQGEERLLVYEFIKNASLDQFIFDTEKRQLLDWVVRYKMIGGIARGLLYLHEDSRFRIIHRDLKASNILLDQEMNPKIADFGLAKLFDSGQTMTHRFTSRIAGTYGYMAPEYAMHGQFSVKTDVFSFGVLVIEIITGKRNNNGGSNGDEDAEDLLSWVWRSWREDTILSVIDPSLTAGSRNEILRCIHIGLLCVQESAATRPTMATVSLMLNSYSFTLPTPLRPAFVLESVVIPSNVSSSTEGLQMSSNDVTVSEFSPR.

The first 23 residues, 1-23 (MEHVRVIFFFACFLTLAPFHAFA), serve as a signal peptide directing secretion. Residues 24 to 286 (QVDSYEFDPD…RTGKGKGGSK (263 aa)) lie on the Extracellular side of the membrane. 2 Gnk2-homologous domains span residues 30–134 (FDPD…NRTI) and 140–249 (TNPT…TWRF). 6 N-linked (GlcNAc...) asparagine glycosylation sites follow: Asn-41, Asn-45, Asn-71, Asn-107, Asn-131, and Asn-187. Positions 260–281 (PPAIQPADSPQSAARTERTGKG) are disordered. Residues 287–307 (VIIAIVIPILLVALLAICLCL) traverse the membrane as a helical segment. The Cytoplasmic portion of the chain corresponds to 308 to 679 (VLKWRKNKSG…DVTVSEFSPR (372 aa)). In terms of domain architecture, Protein kinase spans 357 to 637 (FSSENELGRG…SLMLNSYSFT (281 aa)). ATP-binding positions include 363–371 (LGRGGFGSV) and Lys-385. A Phosphotyrosine modification is found at Tyr-430. Asp-482 (proton acceptor) is an active-site residue. Ser-486 carries the phosphoserine modification. A Phosphothreonine modification is found at Thr-524. Tyr-532 is subject to Phosphotyrosine. Positions 659-679 (SSTEGLQMSSNDVTVSEFSPR) are disordered.

It belongs to the protein kinase superfamily. Ser/Thr protein kinase family. CRK subfamily.

It localises to the membrane. It catalyses the reaction L-seryl-[protein] + ATP = O-phospho-L-seryl-[protein] + ADP + H(+). The catalysed reaction is L-threonyl-[protein] + ATP = O-phospho-L-threonyl-[protein] + ADP + H(+). The chain is Cysteine-rich receptor-like protein kinase 29 (CRK29) from Arabidopsis thaliana (Mouse-ear cress).